We begin with the raw amino-acid sequence, 698 residues long: Elongation factor G 1 (698 aa).

The 283-residue stretch at 8 to 290 (ERYRNIGICA…AVIEFLPAPV (283 aa)) folds into the tr-type G domain. GTP-binding positions include 17 to 24 (AHVDAGKT), 88 to 92 (DTPGH), and 142 to 145 (NKMD).

Belongs to the TRAFAC class translation factor GTPase superfamily. Classic translation factor GTPase family. EF-G/EF-2 subfamily.

It is found in the cytoplasm. Catalyzes the GTP-dependent ribosomal translocation step during translation elongation. During this step, the ribosome changes from the pre-translocational (PRE) to the post-translocational (POST) state as the newly formed A-site-bound peptidyl-tRNA and P-site-bound deacylated tRNA move to the P and E sites, respectively. Catalyzes the coordinated movement of the two tRNA molecules, the mRNA and conformational changes in the ribosome. In Aliivibrio fischeri (strain ATCC 700601 / ES114) (Vibrio fischeri), this protein is Elongation factor G 1.